The chain runs to 410 residues: Translation initiation factor 2 subunit gamma (410 aa).

In terms of domain architecture, tr-type G spans 6 to 203 (QSEVNIGMVG…AIQEFIPTPK (198 aa)). The tract at residues 15-22 (GHVDHGKT) is G1. Residues Asp18, Thr22, Gly43, and Ser45 each contribute to the Mg(2+) site. Residue 18–23 (DHGKTS) coordinates GTP. The interval 43 to 47 (GISIR) is G2. The Zn(2+) site is built by Cys58, Cys61, Cys73, and Cys76. Residues 90–93 (DAPG) form a G3 region. Residues 146-149 (NKID) and 181-183 (SAH) contribute to the GTP site. Positions 146–149 (NKID) are G4. Residues 181 to 183 (SAH) form a G5 region.

This sequence belongs to the TRAFAC class translation factor GTPase superfamily. Classic translation factor GTPase family. EIF2G subfamily. In terms of assembly, heterotrimer composed of an alpha, a beta and a gamma chain. It depends on Mg(2+) as a cofactor.

The enzyme catalyses GTP + H2O = GDP + phosphate + H(+). Functionally, eIF-2 functions in the early steps of protein synthesis by forming a ternary complex with GTP and initiator tRNA. The polypeptide is Translation initiation factor 2 subunit gamma (Methanococcus vannielii (strain ATCC 35089 / DSM 1224 / JCM 13029 / OCM 148 / SB)).